Reading from the N-terminus, the 596-residue chain is Proton channel OTOP3 (596 aa).

The segment covering 1–21 has biased composition (low complexity); sequence MGRGARAAAAQSRWGRASRAS. Residues 1 to 59 form a disordered region; that stretch reads MGRGARAAAAQSRWGRASRASVSPGRTIRSAPAVGEAQETEAAPEKENRVDVGAEERAA. The Cytoplasmic segment spans residues 1 to 88; sequence MGRGARAAAA…RDRQAQKAGQ (88 aa). Phosphoserine occurs at positions 21 and 23. Over residues 43-59 the composition is skewed to basic and acidic residues; sequence APEKENRVDVGAEERAA. The helical transmembrane segment at 89 to 109 threads the bilayer; the sequence is LFSGLLALNVVFLGGAFICSM. The Extracellular segment spans residues 110 to 119; that stretch reads IFNKVAVTLG. The chain crosses the membrane as a helical span at residues 120–143; that stretch reads DVWILLATLKVLSLLWLLYYVAST. Residues 144–159 are Cytoplasmic-facing; that stretch reads TRRPHAVLYQDPHAGP. The chain crosses the membrane as a helical span at residues 160–181; it reads LWVRGSLVLFGSCTFCLNIFRV. Topologically, residues 182–193 are extracellular; it reads GYDVSHIRCKSQ. The chain crosses the membrane as a helical span at residues 194-217; it reads LDLVFSVIEMVFIGVQTWVLWKHC. At 218-225 the chain is on the cytoplasmic side; sequence KDCVRVQT. Residues 226–248 form a helical membrane-spanning segment; that stretch reads NFTRCGLMLTLATNLLLWVLAVT. Topologically, residues 249-295 are extracellular; that stretch reads NDSMHREIEAELGILMEKSTGNETNTCLCLNATACEAFRRGFLMLYP. Residues 296–312 form a helical membrane-spanning segment; sequence FSTEYCLICCAVLFVMW. The Cytoplasmic segment spans residues 313 to 338; it reads KNVGRHVAPHMGAHPATAPFHLHGAI. A helical transmembrane segment spans residues 339 to 358; sequence FGPLLGLLVLLAGVCVFVLF. Over 359–372 the chain is Extracellular; the sequence is QIEASGPAIACQYF. The chain crosses the membrane as a helical span at residues 373-395; the sequence is TLYYAFYVAVLPTMSLACLAGTA. Over 396 to 413 the chain is Cytoplasmic; the sequence is IHGLEERELDTVKNPTRS. A helical transmembrane segment spans residues 414–435; sequence LDVVLLMGAALGQMGIAYFSIV. Topologically, residues 436-446 are extracellular; sequence AIVAKRPHELL. Residues 447-469 traverse the membrane as a helical segment; it reads NRLILAYSLLLILQHIAQNLFII. Residues 470 to 529 are Cytoplasmic-facing; that stretch reads EGLHRRPLWETVPEGLAGKQEAEPPRRGSLLELGQGLQRASLAYIHSYSHLNWKRRALKE. Residues 530 to 547 traverse the membrane as a helical segment; the sequence is ISLFLILCNITLWMMPAF. Over 548–566 the chain is Extracellular; sequence GIHPEFENGLEKDFYGYQI. The helical transmembrane segment at 567–589 threads the bilayer; the sequence is WFAIVNFGLPLGVFYRMHSVGGL. At 590–596 the chain is on the cytoplasmic side; sequence VEVYLGA.

Belongs to the otopetrin family. Homodimer.

It is found in the cell membrane. The catalysed reaction is H(+)(in) = H(+)(out). With respect to regulation, activated by extracellular acidification. Activated by Zn(2+) under non-acidic conditions. Proton-selective channel gated by extracellular protons. In Homo sapiens (Human), this protein is Proton channel OTOP3.